The sequence spans 261 residues: Lys-63-specific deubiquitinase BRCC36 (261 aa).

In terms of domain architecture, MPN spans 6–149 (VHIQGDAFLV…YTCFQSVQAQ (144 aa)). The Zn(2+) site is built by histidine 92, histidine 94, and aspartate 105. The JAMM motif signature appears at 92-105 (HSHPHITVWPSHVD).

The protein belongs to the peptidase M67A family. BRCC36 subfamily. As to quaternary structure, component of the BRCA1-A complex, at least composed of brca1, bard1, uimc1/rap80, abraxas1, brcc3/brcc36, babam2 and babam1/nba1. In the BRCA1-A complex, interacts directly with abraxas1 and babam2. Component of the BRISC complex, at least composed of abraxas2, brcc3/brcc36, babam2 and babam1/nba1. Within the complex, interacts directly with abraxas2. Both the BRCA1-A complex and the BRISC complex bind polyubiquitin. It depends on Zn(2+) as a cofactor.

The protein localises to the nucleus. The protein resides in the cytoplasm. It is found in the cytoskeleton. Its subcellular location is the spindle pole. In terms of biological role, metalloprotease that specifically cleaves 'Lys-63'-linked polyubiquitin chains. Does not have activity toward 'Lys-48'-linked polyubiquitin chains. Component of the BRCA1-A complex, a complex that specifically recognizes 'Lys-63'-linked ubiquitinated histones H2A and H2AX at DNA lesions sites, leading to target the brca1-bard1 heterodimer to sites of DNA damage at double-strand breaks (DSBs). In the BRCA1-A complex, it specifically removes 'Lys-63'-linked ubiquitin on histones H2A and H2AX, antagonizing the rnf8-dependent ubiquitination at double-strand breaks (DSBs). Catalytic subunit of the BRISC complex, a multiprotein complex that specifically cleaves 'Lys-63'-linked ubiquitin in various substrates. Mediates the specific 'Lys-63'-specific deubiquitination associated with the COP9 signalosome complex (CSN), via the interaction of the BRISC complex with the CSN complex. The BRISC complex is required for normal mitotic spindle assembly and microtubule attachment to kinetochores via its role in deubiquitinating numa1. Plays a role in interferon signaling via its role in the deubiquitination of the interferon receptor ifnar1; deubiquitination increases ifnar1 activity by enhancing its stability and cell surface expression. Acts as a regulator of the NLRP3 inflammasome by mediating deubiquitination of nlrp3. Down-regulates the response to bacterial lipopolysaccharide (LPS) via its role in ifnar1 deubiquitination. The sequence is that of Lys-63-specific deubiquitinase BRCC36 (brcc3) from Xenopus tropicalis (Western clawed frog).